The following is a 147-amino-acid chain: Angiogenin (147 aa).

Residues 1 to 24 form the signal peptide; it reads MVMGLGVLLLVFVLGLGLTPPTLA. Gln25 is subject to Pyrrolidone carboxylic acid. The active-site Proton acceptor is His37. Positions 45 and 46 each coordinate tRNA. 3 cysteine pairs are disulfide-bonded: Cys50–Cys105, Cys63–Cys116, and Cys81–Cys131. The Nucleolar localization signal signature appears at 55 to 59; it reads RRRGL. Residues Cys105 and Val127 each contribute to the tRNA site. The Proton donor role is filled by His138.

Belongs to the pancreatic ribonuclease family. In terms of assembly, homodimer. Interacts with RNH1; inhibiting ANG ribonuclease activity. Interacts with PCNA.

Its subcellular location is the secreted. The protein resides in the nucleus. It localises to the nucleolus. The protein localises to the cytoplasm. It is found in the stress granule. Its activity is regulated as follows. Has weak tRNA ribonuclease activity by itself due to partial autoinhibition by its C-terminus, which folds into a short alpha-helix that partially occludes the substrate-binding site. In absence of stress, the ribonuclease activity is inhibited by RNH1 in the cytoplasm. In response to stress, dissociates from RNH1 in the cytoplasm and associates with cytoplasmic ribosomes with vacant A-sites: ribosomes directly activate the tRNA ribonuclease activity of ANG by refolding the C-terminal alpha-helix. In response to stress, the angiogenic activity of ANG is inhibited by RNH1 in the nucleus. Secreted ribonuclease that can either promote or restrict cell proliferation of target cells, depending on the context. Endocytosed in target cells via its receptor PLXNB2 and translocates to the cytoplasm or nucleus. Under stress conditions, localizes to the cytoplasm and promotes the assembly of stress granules (SGs): specifically cleaves a subset of tRNAs within anticodon loops to produce tRNA-derived stress-induced fragments (tiRNAs), resulting in translation repression and inhibition of cell proliferation. tiRNas also prevent formation of apoptosome, thereby promoting cell survival. Preferentially cleaves RNAs between a pyrimidine and an adenosine residue, suggesting that it cleaves the anticodon loop of tRNA(Ala) (32-UUAGCAU-38) after positions 33 and 36. Cleaves a subset of tRNAs, including tRNA(Ala), tRNA(Glu), tRNA(Gly), tRNA(Lys), tRNA(Val), tRNA(His), tRNA(Asp) and tRNA(Sec). Under growth conditions and in differentiated cells, translocates to the nucleus and stimulates ribosomal RNA (rRNA) transcription, including that containing the initiation site sequences of 45S rRNA, thereby promoting cell growth and proliferation. Angiogenin induces vascularization of normal and malignant tissues via its ability to promote rRNA transcription. Involved in hematopoietic stem and progenitor cell (HSPC) growth and survival by promoting rRNA transcription in growth conditions and inhibiting translation in response to stress, respectively. Mediates the crosstalk between myeloid and intestinal epithelial cells to protect the intestinal epithelial barrier integrity: secreted by myeloid cells and promotes intestinal epithelial cells proliferation and survival. Also mediates osteoclast-endothelial cell crosstalk in growing bone: produced by osteoclasts and protects the neighboring vascular cells against senescence by promoting rRNA transcription. The polypeptide is Angiogenin (ANG) (Gorilla gorilla gorilla (Western lowland gorilla)).